A 319-amino-acid chain; its full sequence is Thymidylate synthase (319 aa).

DUMP is bound by residues Arg-25 and 181–182 (RR). Cys-201 (nucleophile) is an active-site residue. DUMP-binding positions include 221–224 (RSAD), Asn-232, and 262–264 (HIY). Asp-224 is a (6R)-5,10-methylene-5,6,7,8-tetrahydrofolate binding site. Ala-318 is a (6R)-5,10-methylene-5,6,7,8-tetrahydrofolate binding site.

It belongs to the thymidylate synthase family. Bacterial-type ThyA subfamily. As to quaternary structure, homodimer.

Its subcellular location is the cytoplasm. It carries out the reaction dUMP + (6R)-5,10-methylene-5,6,7,8-tetrahydrofolate = 7,8-dihydrofolate + dTMP. It participates in pyrimidine metabolism; dTTP biosynthesis. Catalyzes the reductive methylation of 2'-deoxyuridine-5'-monophosphate (dUMP) to 2'-deoxythymidine-5'-monophosphate (dTMP) while utilizing 5,10-methylenetetrahydrofolate (mTHF) as the methyl donor and reductant in the reaction, yielding dihydrofolate (DHF) as a by-product. This enzymatic reaction provides an intracellular de novo source of dTMP, an essential precursor for DNA biosynthesis. This Oenococcus oeni (strain ATCC BAA-331 / PSU-1) protein is Thymidylate synthase.